The primary structure comprises 141 residues: Period circadian protein (141 aa).

A disordered region spans residues Glu1–Lys141. Over residues His11 to Val23 the composition is skewed to polar residues. Over residues Gly29–Thr68 the composition is skewed to gly residues. 19 consecutive repeat copies span residues Gly30–Thr31, Gly33–Thr34, Gly35–Thr36, Gly37–Thr38, Gly39–Thr40, Gly41–Thr42, Gly43–Thr44, Gly45–Thr46, Gly47–Thr48, Gly49–Thr50, Gly51–Thr52, Gly53–Thr54, Gly55–Thr56, Gly57–Thr58, Gly59–Thr60, Gly61–Thr62, Gly63–Thr64, Gly65–Thr66, and Gly67–Thr68. Residues Gly30 to Thr94 are 32 X 2 AA approximate tandem repeats of G-T. Residues Ala69–Ser70 form a 20; approximate repeat. Positions Ala69 to Ala85 are enriched in low complexity. Residues Gly71–Thr72 form repeat 21. A 22; approximate repeat occupies Ala73 to Thr74. The stretch at Gly75 to Thr76 is repeat 23. The stretch at Ala77 to Ser78 is one 24; approximate repeat. The stretch at Gly79–Thr80 is repeat 25. The 26; approximate repeat unit spans residues Ala81–Thr82. Repeat unit 27 spans residues Gly83 to Thr84. The stretch at Ala85 to Asn86 is one 28; approximate repeat. A run of 2 repeats spans residues Gly87 to Thr88 and Gly89 to Thr90. The stretch at Gly91–Lys92 is one 31; approximate repeat. Repeat 32 spans residues Gly93 to Thr94. A compositionally biased stretch (gly residues) spans Ser101 to Thr113. Over residues Gly114–Thr129 the composition is skewed to low complexity. Polar residues predominate over residues Pro130–Lys141.

Forms a heterodimer with timeless (TIM); the complex then translocates into the nucleus. Post-translationally, phosphorylated with a circadian rhythmicity, probably by the double-time protein (dbt). Phosphorylation could be implicated in the stability of per monomer and in the formation of heterodimer per-tim.

The protein resides in the nucleus. The protein localises to the cytoplasm. Its subcellular location is the perinuclear region. In terms of biological role, essential for biological clock functions. Determines the period length of circadian and ultradian rhythms; an increase in PER dosage leads to shortened circadian rhythms and a decrease leads to lengthened circadian rhythms. Essential for the circadian rhythmicity of locomotor activity, eclosion behavior, and for the rhythmic component of the male courtship song that originates in the thoracic nervous system. The biological cycle depends on the rhythmic formation and nuclear localization of the TIM-PER complex. Light induces the degradation of TIM, which promotes elimination of PER. Nuclear activity of the heterodimer coordinatively regulates PER and TIM transcription through a negative feedback loop. Behaves as a negative element in circadian transcriptional loop. Does not appear to bind DNA, suggesting indirect transcriptional inhibition. The sequence is that of Period circadian protein (per) from Drosophila serrata (Fruit fly).